A 71-amino-acid polypeptide reads, in one-letter code: Conotoxin Bu25 (71 aa).

Residues 1–21 (MGMRMMVTVFPLVVLATTVVS) form the signal peptide. The propeptide occupies 22–44 (LRSNRASDGRRGIVNKLNDLVPK). Position 70 is an arginine amide (arginine 70).

The protein belongs to the conotoxin A superfamily. Post-translationally, contains 3 disulfide bonds. They are not indicated here, since framework IV presents two different connectivities (I-V, II-III, IV-VI and I-III, II-V, IV-VI). Expressed by the venom duct.

The protein localises to the secreted. This Conus bullatus (Bubble cone) protein is Conotoxin Bu25.